We begin with the raw amino-acid sequence, 223 residues long: Endonuclease V (223 aa).

2 residues coordinate Mg(2+): D35 and D103.

This sequence belongs to the endonuclease V family. Requires Mg(2+) as cofactor.

The protein localises to the cytoplasm. It carries out the reaction Endonucleolytic cleavage at apurinic or apyrimidinic sites to products with a 5'-phosphate.. Functionally, DNA repair enzyme involved in the repair of deaminated bases. Selectively cleaves double-stranded DNA at the second phosphodiester bond 3' to a deoxyinosine leaving behind the intact lesion on the nicked DNA. This is Endonuclease V from Salmonella enteritidis PT4 (strain P125109).